A 271-amino-acid polypeptide reads, in one-letter code: NAD kinase (271 aa).

The active-site Proton acceptor is Asp-52. Residues 52-53 (DG), 129-130 (NE), Arg-155, Asp-157, and Ala-192 each bind NAD(+).

It belongs to the NAD kinase family. A divalent metal cation serves as cofactor.

The protein resides in the cytoplasm. It catalyses the reaction NAD(+) + ATP = ADP + NADP(+) + H(+). Involved in the regulation of the intracellular balance of NAD and NADP, and is a key enzyme in the biosynthesis of NADP. Catalyzes specifically the phosphorylation on 2'-hydroxyl of the adenosine moiety of NAD to yield NADP. The polypeptide is NAD kinase (Geobacillus stearothermophilus (Bacillus stearothermophilus)).